The chain runs to 322 residues: Phosphoserine phosphatase (322 aa).

Residue 10 to 12 (PED) coordinates substrate. 3 residues coordinate Mg(2+): D12, D116, and D118. Catalysis depends on D116, which acts as the Nucleophile. Residue D118 is the Proton donor of the active site. Substrate is bound by residues E125, R161, 204-205 (SG), and K249. Residue D272 participates in Mg(2+) binding. N275 serves as a coordination point for substrate.

It belongs to the HAD-like hydrolase superfamily. SerB family. The cofactor is Mg(2+).

It carries out the reaction O-phospho-L-serine + H2O = L-serine + phosphate. The enzyme catalyses O-phospho-D-serine + H2O = D-serine + phosphate. The protein operates within amino-acid biosynthesis; L-serine biosynthesis; L-serine from 3-phospho-D-glycerate: step 3/3. Functionally, catalyzes the dephosphorylation of phosphoserine (P-Ser). This Escherichia coli O157:H7 protein is Phosphoserine phosphatase (serB).